The primary structure comprises 78 residues: cAMP-dependent protein kinase inhibitor beta (78 aa).

Residues 1 to 10 (MRTDSSKMTD) are compositionally biased toward basic and acidic residues. Residues 1–78 (MRTDSSKMTD…QLEKPQNEEK (78 aa)) are disordered. Over residues 33–42 (IQSSAATDGT) the composition is skewed to polar residues. Residues 53–78 (SVKEDAKEKDEKTTQDQLEKPQNEEK) are compositionally biased toward basic and acidic residues.

This sequence belongs to the PKI family.

In terms of biological role, extremely potent competitive inhibitor of cAMP-dependent protein kinase activity, this protein interacts with the catalytic subunit of the enzyme after the cAMP-induced dissociation of its regulatory chains. This is cAMP-dependent protein kinase inhibitor beta (PKIB) from Homo sapiens (Human).